Reading from the N-terminus, the 327-residue chain is Ribosomal RNA large subunit methyltransferase F (327 aa).

The tract at residues 1–24 is disordered; that stretch reads MPRKTSSQPRPAEPKAVLHPRNRH.

The protein belongs to the methyltransferase superfamily. METTL16/RlmF family.

It localises to the cytoplasm. It carries out the reaction adenosine(1618) in 23S rRNA + S-adenosyl-L-methionine = N(6)-methyladenosine(1618) in 23S rRNA + S-adenosyl-L-homocysteine + H(+). Specifically methylates the adenine in position 1618 of 23S rRNA. This chain is Ribosomal RNA large subunit methyltransferase F, found in Stutzerimonas stutzeri (strain A1501) (Pseudomonas stutzeri).